Consider the following 280-residue polypeptide: Ribosomal protein L11 methyltransferase (280 aa).

S-adenosyl-L-methionine is bound by residues T131, G152, D174, and N217.

The protein belongs to the methyltransferase superfamily. PrmA family.

It localises to the cytoplasm. The catalysed reaction is L-lysyl-[protein] + 3 S-adenosyl-L-methionine = N(6),N(6),N(6)-trimethyl-L-lysyl-[protein] + 3 S-adenosyl-L-homocysteine + 3 H(+). Its function is as follows. Methylates ribosomal protein L11. This chain is Ribosomal protein L11 methyltransferase, found in Bacteroides fragilis (strain ATCC 25285 / DSM 2151 / CCUG 4856 / JCM 11019 / LMG 10263 / NCTC 9343 / Onslow / VPI 2553 / EN-2).